Consider the following 239-residue polypeptide: Superoxide dismutase 1 copper chaperone (239 aa).

The region spanning 7–70 is the HMA domain; it reads FYEATYAVPM…ALRDCGRDAI (64 aa). Residues Cys18 and Cys21 each coordinate Cu cation. Residues Cys28 and Cys65 are joined by a disulfide bond. Asp163 provides a ligand contact to Zn(2+). Positions 219 and 221 each coordinate Cu cation.

Belongs to the CCS1 family. Requires Cu(2+) as cofactor.

Its subcellular location is the cytoplasm. Functionally, copper chaperone for superoxide dismutase 1 (SOD1). Binds copper ions and delivers them specifically to SOD1. This chain is Superoxide dismutase 1 copper chaperone (CCS1), found in Candida glabrata (strain ATCC 2001 / BCRC 20586 / JCM 3761 / NBRC 0622 / NRRL Y-65 / CBS 138) (Yeast).